Here is a 335-residue protein sequence, read N- to C-terminus: S-adenosylmethionine:tRNA ribosyltransferase-isomerase (335 aa).

Belongs to the QueA family. As to quaternary structure, monomer.

It localises to the cytoplasm. The enzyme catalyses 7-aminomethyl-7-carbaguanosine(34) in tRNA + S-adenosyl-L-methionine = epoxyqueuosine(34) in tRNA + adenine + L-methionine + 2 H(+). It functions in the pathway tRNA modification; tRNA-queuosine biosynthesis. Functionally, transfers and isomerizes the ribose moiety from AdoMet to the 7-aminomethyl group of 7-deazaguanine (preQ1-tRNA) to give epoxyqueuosine (oQ-tRNA). This is S-adenosylmethionine:tRNA ribosyltransferase-isomerase from Thermotoga petrophila (strain ATCC BAA-488 / DSM 13995 / JCM 10881 / RKU-1).